A 540-amino-acid chain; its full sequence is tRNA-2-methylthio-N(6)-dimethylallyladenosine synthase (540 aa).

Positions 41–157 (RTYEVRTFGC…LPTLLERSAH (117 aa)) constitute an MTTase N-terminal domain. [4Fe-4S] cluster is bound by residues C50, C86, C120, C194, C198, and C201. Positions 180–416 (RESAYSGWVS…IALQERIQAE (237 aa)) constitute a Radical SAM core domain. Residues 419 to 486 (KELVGTTQEL…PFFLIADGPL (68 aa)) form the TRAM domain.

It belongs to the methylthiotransferase family. MiaB subfamily. Monomer. The cofactor is [4Fe-4S] cluster.

The protein localises to the cytoplasm. It catalyses the reaction N(6)-dimethylallyladenosine(37) in tRNA + (sulfur carrier)-SH + AH2 + 2 S-adenosyl-L-methionine = 2-methylsulfanyl-N(6)-dimethylallyladenosine(37) in tRNA + (sulfur carrier)-H + 5'-deoxyadenosine + L-methionine + A + S-adenosyl-L-homocysteine + 2 H(+). In terms of biological role, catalyzes the methylthiolation of N6-(dimethylallyl)adenosine (i(6)A), leading to the formation of 2-methylthio-N6-(dimethylallyl)adenosine (ms(2)i(6)A) at position 37 in tRNAs that read codons beginning with uridine. The chain is tRNA-2-methylthio-N(6)-dimethylallyladenosine synthase from Corynebacterium urealyticum (strain ATCC 43042 / DSM 7109).